We begin with the raw amino-acid sequence, 121 residues long: Ribonuclease P protein component 4 (121 aa).

Zn(2+) contacts are provided by Cys-63, Cys-66, Cys-89, and Cys-92.

Belongs to the eukaryotic/archaeal RNase P protein component 4 family. Consists of a catalytic RNA component and at least 4-5 protein subunits. Zn(2+) serves as cofactor.

The protein localises to the cytoplasm. The enzyme catalyses Endonucleolytic cleavage of RNA, removing 5'-extranucleotides from tRNA precursor.. Its function is as follows. Part of ribonuclease P, a protein complex that generates mature tRNA molecules by cleaving their 5'-ends. The protein is Ribonuclease P protein component 4 of Methanobrevibacter smithii (strain ATCC 35061 / DSM 861 / OCM 144 / PS).